Reading from the N-terminus, the 1015-residue chain is Translation initiation factor IF-2 (1015 aa).

4 disordered regions span residues 124–144 (EKEP…EKKV), 159–179 (EVTV…PKPV), 196–230 (KKEE…KEEE), and 250–386 (IDLA…VSEE). Composition is skewed to basic and acidic residues over residues 196–217 (KKEE…EKPV) and 265–315 (SKEE…DPNG). Residues 514-684 (HRAPIVTVMG…LLEAEMLDLK (171 aa)) enclose the tr-type G domain. The tract at residues 523-530 (GHVDHGKT) is G1. Residue 523–530 (GHVDHGKT) coordinates GTP. The G2 stretch occupies residues 548–552 (GITQH). The interval 570–573 (DTPG) is G3. GTP is bound by residues 570 to 574 (DTPGH) and 624 to 627 (NKID). Residues 624–627 (NKID) form a G4 region. Positions 660–662 (SAK) are G5.

It belongs to the TRAFAC class translation factor GTPase superfamily. Classic translation factor GTPase family. IF-2 subfamily.

The protein resides in the cytoplasm. Functionally, one of the essential components for the initiation of protein synthesis. Protects formylmethionyl-tRNA from spontaneous hydrolysis and promotes its binding to the 30S ribosomal subunits. Also involved in the hydrolysis of GTP during the formation of the 70S ribosomal complex. This Bacteroides fragilis (strain ATCC 25285 / DSM 2151 / CCUG 4856 / JCM 11019 / LMG 10263 / NCTC 9343 / Onslow / VPI 2553 / EN-2) protein is Translation initiation factor IF-2.